Consider the following 143-residue polypeptide: Large ribosomal subunit protein uL13 (143 aa).

The protein belongs to the universal ribosomal protein uL13 family. Part of the 50S ribosomal subunit.

This protein is one of the early assembly proteins of the 50S ribosomal subunit, although it is not seen to bind rRNA by itself. It is important during the early stages of 50S assembly. The chain is Large ribosomal subunit protein uL13 from Geobacter sulfurreducens (strain ATCC 51573 / DSM 12127 / PCA).